The primary structure comprises 107 residues: uncharacterized protein (107 aa).

Residues 6 to 107 enclose the Glutaredoxin domain; the sequence is KARIDQLVTA…QEMLEVALAS (102 aa). Residue Lys23 coordinates glutathione. Cys31 is a [2Fe-2S] cluster binding site. Glutathione contacts are provided by residues Arg60 and 85-86; that span reads SD.

Belongs to the glutaredoxin family. Monothiol subfamily.

This is an uncharacterized protein from Synechocystis sp. (strain ATCC 27184 / PCC 6803 / Kazusa).